Here is a 445-residue protein sequence, read N- to C-terminus: Exodeoxyribonuclease 7 large subunit (445 aa).

The protein belongs to the XseA family. As to quaternary structure, heterooligomer composed of large and small subunits.

It is found in the cytoplasm. It catalyses the reaction Exonucleolytic cleavage in either 5'- to 3'- or 3'- to 5'-direction to yield nucleoside 5'-phosphates.. Functionally, bidirectionally degrades single-stranded DNA into large acid-insoluble oligonucleotides, which are then degraded further into small acid-soluble oligonucleotides. The polypeptide is Exodeoxyribonuclease 7 large subunit (Shewanella pealeana (strain ATCC 700345 / ANG-SQ1)).